The chain runs to 490 residues: Serine/threonine-protein kinase BSK6 (490 aa).

The N-myristoyl glycine moiety is linked to residue Gly-2. A Phosphoserine modification is found at Ser-25. The 255-residue stretch at 56-310 folds into the Protein kinase domain; the sequence is DNIVSEHGEK…KSLVTSLVTL (255 aa). ATP contacts are provided by residues 62 to 70 and Lys-84; that span reads HGEKAPNVV. Asp-178 functions as the Proton acceptor in the catalytic mechanism. Residue Ser-373 is modified to Phosphoserine.

This sequence belongs to the protein kinase superfamily. Ser/Thr protein kinase family. Interacts with BRI1, ASK7/BIN2, ASK9/BIL2, BSK1, BSK5, BSK8 and BSK11. In terms of processing, phosphorylated by BRI1, ASK7/BIN2 and ASK9/BIL2.

Its subcellular location is the cell membrane. It catalyses the reaction L-seryl-[protein] + ATP = O-phospho-L-seryl-[protein] + ADP + H(+). The catalysed reaction is L-threonyl-[protein] + ATP = O-phospho-L-threonyl-[protein] + ADP + H(+). Functionally, probable serine/threonine kinase that acts as a positive regulator of brassinosteroid (BR) signaling downstream of the receptor kinase BRI1. Functions redundantly with BSK3, BSK4, BSK7 and BSK8. The chain is Serine/threonine-protein kinase BSK6 from Arabidopsis thaliana (Mouse-ear cress).